The primary structure comprises 229 residues: MEFNFTPIPAVFCKKLNRFVGEVVLQGEKVLVHIPNSGRLAEILTEGRLVYLREGKNPGRKYQYDLVLAQMPESLVLVDSLLPNKIAQGLLEKGIIKPFSREIDQVAAEQTKGQSRFDFKVQLRDKTGFIEVKSVTLVEGKYALFPDAPTPRGVRHLEELRALSSQYLTAVVFLICREDAEVFKPNDKCDPYFASALKKAAMAGVYIKAYRLKLDLKGVYFDREMEVVL.

Belongs to the SfsA family.

This is Sugar fermentation stimulation protein homolog from Carboxydothermus hydrogenoformans (strain ATCC BAA-161 / DSM 6008 / Z-2901).